We begin with the raw amino-acid sequence, 238 residues long: MSEVTTAEFNEEGKYLRKIRSFVLREGRLTKGQAQAIETQWPTMGLDYSPTPLNLTEVFGREADTVLEIGFGMGASLVQMAQEAPEQNFIGIEVHKPGVGSCLSDAAAAGVTNLRVYHHDAMEVLEHAIADGSLARVQLFFPDPWHKKRHHKRRIVQAEFAELIRRKLKIGGVFHMATDWENYSEHMLEVMNAANGYKNQSADGTVVPRPDHRPLTKFEARGHRLGHGVWDLMFERIA.

Glutamate 68, glutamate 93, aspartate 120, and aspartate 143 together coordinate S-adenosyl-L-methionine. Aspartate 143 is a catalytic residue. Substrate-binding positions include lysine 147, aspartate 179, and 216–219 (TKFE).

The protein belongs to the class I-like SAM-binding methyltransferase superfamily. TrmB family.

It carries out the reaction guanosine(46) in tRNA + S-adenosyl-L-methionine = N(7)-methylguanosine(46) in tRNA + S-adenosyl-L-homocysteine. It participates in tRNA modification; N(7)-methylguanine-tRNA biosynthesis. Its function is as follows. Catalyzes the formation of N(7)-methylguanine at position 46 (m7G46) in tRNA. The chain is tRNA (guanine-N(7)-)-methyltransferase from Shewanella sp. (strain MR-4).